We begin with the raw amino-acid sequence, 334 residues long: Phosphoribosylformylglycinamidine cyclo-ligase (334 aa).

This sequence belongs to the AIR synthase family.

The protein localises to the cytoplasm. The catalysed reaction is 2-formamido-N(1)-(5-O-phospho-beta-D-ribosyl)acetamidine + ATP = 5-amino-1-(5-phospho-beta-D-ribosyl)imidazole + ADP + phosphate + H(+). Its pathway is purine metabolism; IMP biosynthesis via de novo pathway; 5-amino-1-(5-phospho-D-ribosyl)imidazole from N(2)-formyl-N(1)-(5-phospho-D-ribosyl)glycinamide: step 2/2. This is Phosphoribosylformylglycinamidine cyclo-ligase from Pyrococcus abyssi (strain GE5 / Orsay).